Reading from the N-terminus, the 141-residue chain is Transmembrane protein 216 (141 aa).

4 helical membrane passes run 15–35, 49–69, 82–102, and 115–135; these read VLFFLNGWYYATYFLLELLIF, LVLDVVMLLLYLGIEVIRLFF, LGISVALTFPSAMMASYYLLL, and SILLFFCGSELLLEMLTLATF.

In terms of assembly, part of the tectonic-like complex (also named B9 complex). Interacts with TMEM107.

Its subcellular location is the membrane. It is found in the cytoplasm. The protein resides in the cytoskeleton. It localises to the cilium basal body. Functionally, part of the tectonic-like complex which is required for tissue-specific ciliogenesis and may regulate ciliary membrane composition. The protein is Transmembrane protein 216 (Tmem216) of Mus musculus (Mouse).